The following is a 242-amino-acid chain: Uridylate kinase (242 aa).

Residue 16-19 (KVSG) participates in ATP binding. UMP is bound at residue Gly58. Gly59 and Arg63 together coordinate ATP. Residues Asp78 and 139 to 146 (TGNPFCTT) contribute to the UMP site. Positions 166, 167, 172, and 175 each coordinate ATP.

The protein belongs to the UMP kinase family. Homohexamer.

Its subcellular location is the cytoplasm. It catalyses the reaction UMP + ATP = UDP + ADP. It participates in pyrimidine metabolism; CTP biosynthesis via de novo pathway; UDP from UMP (UMPK route): step 1/1. With respect to regulation, inhibited by UTP. Catalyzes the reversible phosphorylation of UMP to UDP. This is Uridylate kinase from Rickettsia prowazekii (strain Madrid E).